Consider the following 567-residue polypeptide: Major facilitator superfamily transporter MG061 (567 aa).

Transmembrane regions (helical) follow at residues 15 to 35 (ITLW…WFVI), 78 to 98 (WTIT…VLKF), 104 to 124 (VLIM…GDPL), 193 to 213 (GYAL…TLVV), 230 to 250 (ILSN…FTPF), 264 to 284 (VYIM…FLWF), 321 to 341 (LIGV…PAWF), 363 to 383 (TGLA…FVVF), 405 to 425 (IVVL…SAAG), 426 to 446 (FALI…LSSS), 462 to 482 (LPIL…LFDI), and 503 to 523 (PGVI…NLIV).

The protein belongs to the major facilitator superfamily.

It is found in the cell membrane. The polypeptide is Major facilitator superfamily transporter MG061 (Mycoplasma genitalium (strain ATCC 33530 / DSM 19775 / NCTC 10195 / G37) (Mycoplasmoides genitalium)).